A 67-amino-acid chain; its full sequence is Large ribosomal subunit protein uL29 (67 aa).

This sequence belongs to the universal ribosomal protein uL29 family.

In Ehrlichia ruminantium (strain Gardel), this protein is Large ribosomal subunit protein uL29.